Consider the following 455-residue polypeptide: MSFLIDSSIMITSQILFFGFGWLFFMRQLFKDYEIRQYVVQVIFSVTFAFSCTMFELIIFEILGVLNSSSRYFHWKMNLCVILLILVFMVPFYIGYFIVSNIRLLHKQRLLFSCLLWLTFMYFFWKLGDPFPILSPKHGILSIEQLISRVGVIGVTLMALLSGFGAVNCPYTYMSYFLRNVTDTDILALERRLLQTMDMIISKKKRMAMARRTMFQKGEVHNKPSGFWGMIKSVTTSASGSENLTLIQQEVDALEELSRQLFLETADLYATKERIEYSKTFKGKYFNFLGYFFSIYCVWKIFMATINIVFDRVGKTDPVTRGIEITVNYLGIQFDVKFWSQHISFILVGIIIVTSIRGLLITLTKFFYAISSSKSSNVIVLLLAQIMGMYFVSSVLLIRMSMPLEYRTIITEVLGELQFNFYHRWFDVIFLVSALSSILFLYLAHKQAPEKQMAP.

Transmembrane regions (helical) follow at residues 5 to 25 (IDSS…WLFF), 46 to 66 (VTFA…LGVL), 79 to 99 (LCVI…YFIV), 114 to 134 (CLLW…FPIL), and 150 to 170 (VGVI…VNCP). 2 N-linked (GlcNAc...) asparagine glycosylation sites follow: Asn-180 and Asn-243. 4 helical membrane passes run 290-310 (GYFF…NIVF), 343-363 (ISFI…LITL), 378-398 (VIVL…VLLI), and 425-445 (WFDV…YLAH).

Belongs to the Golgi pH regulator (TC 1.A.38) family. In terms of assembly, homotrimer. Interacts with RABL3; the interaction stabilizes GPR89A. Ubiquitous.

Its subcellular location is the golgi apparatus membrane. It carries out the reaction iodide(out) = iodide(in). The enzyme catalyses chloride(in) = chloride(out). It catalyses the reaction bromide(in) = bromide(out). The catalysed reaction is fluoride(in) = fluoride(out). Voltage-gated channel that enables the transfer of monoatomic anions such as iodide, chloride, bromide and fluoride which may function in counter-ion conductance and participates in Golgi acidification. Plays a role in lymphocyte development, probably by acting as a RABL3 effector in hematopoietic cells. This chain is Golgi pH regulator A, found in Homo sapiens (Human).